Reading from the N-terminus, the 346-residue chain is Cysteinyl leukotriene receptor 2 (346 aa).

At 1-42 (MERKFMSLQPSISVSEMEPNGTFSNNNSRNCTIENFKREFFP) the chain is on the extracellular side. N-linked (GlcNAc...) asparagine glycosylation is found at Asn20, Asn26, and Asn30. Residues 43-63 (IVYLIIFFWGVLGNGLSIYVF) form a helical membrane-spanning segment. At 64–72 (LQPYKKSTS) the chain is on the cytoplasmic side. A helical membrane pass occupies residues 73-93 (VNVFMLNLAISDLLFISTLPF). Topologically, residues 94 to 123 (RADYYLRGSNWIFGDLACRIMSYSLYVNMY) are extracellular. A disulfide bond links Cys111 and Cys187. The helical transmembrane segment at 124 to 144 (SSIYFLTVLSVVRFLAMVHPF) threads the bilayer. Residues 145-153 (RLLHVTSIR) lie on the Cytoplasmic side of the membrane. The chain crosses the membrane as a helical span at residues 154–174 (SAWILCGIIWILIMASSIMLL). The Extracellular segment spans residues 175 to 204 (DSGSEQNGSVTSCLELNLYKIAKLQTMNYI). A glycan (N-linked (GlcNAc...) asparagine) is linked at Asn181. The helical transmembrane segment at 205 to 225 (ALVVGCLLPFFTLSICYLLII) threads the bilayer. Residues 226–245 (RVLLKVEVPESGLRVSHRKA) are Cytoplasmic-facing. The helical transmembrane segment at 246–266 (LTTIIITLIIFFLCFLPYHTL) threads the bilayer. Residues 267-286 (RTVHLTTWKVGLCKDRLHKA) lie on the Extracellular side of the membrane. The helical transmembrane segment at 287–307 (LVITLALAAANACFNPLLYYF) threads the bilayer. Topologically, residues 308–346 (AGENFKDRLKSALRKGHPQKAKTKCVFPVSVWLRKETRV) are cytoplasmic.

The protein belongs to the G-protein coupled receptor 1 family. Widely expressed, with highest levels in the heart, placenta, spleen, peripheral blood leukocytes and adrenal gland. In lung, expressed in the interstitial macrophages, and slightly in smooth muscle cells.

It localises to the cell membrane. Functionally, receptor for cysteinyl leukotrienes. The response is mediated via a G-protein that activates a phosphatidylinositol-calcium second messenger system. Stimulation by BAY u9773, a partial agonist, induces specific contractions of pulmonary veins and might also have an indirect role in the relaxation of the pulmonary vascular endothelium. The rank order of affinities for the leukotrienes is LTC4 = LTD4 &gt;&gt; LTE4. This is Cysteinyl leukotriene receptor 2 (CYSLTR2) from Homo sapiens (Human).